A 258-amino-acid chain; its full sequence is UPF0246 protein ETA_07010 (258 aa).

It belongs to the UPF0246 family.

The polypeptide is UPF0246 protein ETA_07010 (Erwinia tasmaniensis (strain DSM 17950 / CFBP 7177 / CIP 109463 / NCPPB 4357 / Et1/99)).